The chain runs to 214 residues: Holliday junction branch migration complex subunit RuvA (214 aa).

Positions 1–64 (MITRIRGEML…EDAMTLYGFT (64 aa)) are domain I. The tract at residues 65 to 143 (SGEQLAVFEL…DITSKDAYQD (79 aa)) is domain II. The flexible linker stretch occupies residues 144-160 (ISASEKLDNTGEKLGIS). The segment at 161-214 (TRHKHLDELKAALSSLGYTNREIEKTVDAIQGQITEGQDMEELLRLALQKLNTK) is domain III.

The protein belongs to the RuvA family. Homotetramer. Forms an RuvA(8)-RuvB(12)-Holliday junction (HJ) complex. HJ DNA is sandwiched between 2 RuvA tetramers; dsDNA enters through RuvA and exits via RuvB. An RuvB hexamer assembles on each DNA strand where it exits the tetramer. Each RuvB hexamer is contacted by two RuvA subunits (via domain III) on 2 adjacent RuvB subunits; this complex drives branch migration. In the full resolvosome a probable DNA-RuvA(4)-RuvB(12)-RuvC(2) complex forms which resolves the HJ.

It localises to the cytoplasm. The RuvA-RuvB-RuvC complex processes Holliday junction (HJ) DNA during genetic recombination and DNA repair, while the RuvA-RuvB complex plays an important role in the rescue of blocked DNA replication forks via replication fork reversal (RFR). RuvA specifically binds to HJ cruciform DNA, conferring on it an open structure. The RuvB hexamer acts as an ATP-dependent pump, pulling dsDNA into and through the RuvAB complex. HJ branch migration allows RuvC to scan DNA until it finds its consensus sequence, where it cleaves and resolves the cruciform DNA. This Natranaerobius thermophilus (strain ATCC BAA-1301 / DSM 18059 / JW/NM-WN-LF) protein is Holliday junction branch migration complex subunit RuvA.